A 538-amino-acid polypeptide reads, in one-letter code: Cytochrome P450 monooxygenase flvC (538 aa).

The helical transmembrane segment at 17–37 (TVLIAGLLVYWVGSAIFLAVL) threads the bilayer. Cys478 contacts heme.

Belongs to the cytochrome P450 family. Requires heme as cofactor.

It is found in the membrane. The catalysed reaction is pre-flavunoidine + reduced [NADPH--hemoprotein reductase] + O2 = 10-hydroxy-pre-flavunoidine + oxidized [NADPH--hemoprotein reductase] + H2O + H(+). Its pathway is secondary metabolite biosynthesis; terpenoid biosynthesis. Functionally, cytochrome P450 monooxygenase; part of the gene cluster that mediates the biosynthesis of flavunoidine, an alkaloidal terpenoid with a tetracyclic cage-like core connected to dimethylcadaverine via a C-N bond and acylated with 5,5-dimethyl-L-pipecolate. The tetracyclic core is synthesized by the terpene cyclase flvE and the cytochrome P450 monooxygenase flvD. The terpene cyclase flvE catalyzes the cyclization of farnesyl pyrophosphate (FPP) to form (1R,4R,5S)-(+)-acoradiene and the cytochrome P450 monooxygenase flvD is then responsible for oxidative conversion of (1R,4R,5S)-(+)-acoradiene into the tetracyclic cage present in the final product flavunoidine. In parallel, the N-methyltransferase flvH dimethylates L-lysine to give N,N-dimethyl-L-Lysin which is decarboxylated by flvG to afford dimethylcadaverine. The terpene cyclase-like protein flvF is the enzyme that attaches the dimethylcadaverine precusor at the C-7 of the tetracyclic cage to yield pre-flavunoidine. The cytochrome monooxygenase flvC hydroxylates the C-10 position of pre-flavunoidine whereas the NRPS flvI acylates the terpenoid core at the hydroxylated C-10 with dimethylpipecolate to yield final flavunoidine. The bifunctional enzyme flvA and the dehydrogenase flvB are responsible for the synthesis of the dimethylpipecolate precursor. The PLP-dependent lyase domain of flvA might use L-O-acetyl-homoserine and alpha-keto-isovalerate to form an intermediary ketone that can cyclize intramolecularly to yield an imine. The imine can be reduced by flvB to yield the 6-carboxylated pipecolate. The C-terminal alpha-KG-dependent oxygenase domain of flvA is then proposed to catalyze the decarboxylation to yield dimethylpipecolate. This Aspergillus flavus (strain ATCC 200026 / FGSC A1120 / IAM 13836 / NRRL 3357 / JCM 12722 / SRRC 167) protein is Cytochrome P450 monooxygenase flvC.